Here is a 375-residue protein sequence, read N- to C-terminus: G-protein coupled estrogen receptor 1 (375 aa).

Met1 is subject to N-acetylmethionine. Topologically, residues 1–62 (MAATTPAQDV…QQYVIALFLS (62 aa)) are extracellular. 2 N-linked (GlcNAc...) asparagine glycosylation sites follow: Asn32 and Asn44. Residues 63-84 (CLYTIFLFPIGFVGNILILVVN) traverse the membrane as a helical segment. At 85–96 (ISFREKMTIPDL) the chain is on the cytoplasmic side. A helical transmembrane segment spans residues 97–120 (YFINLAAADLILVADSLIEVFNLD). Residues 121–132 (EQYYDIAVLCTF) are Extracellular-facing. Cys130 and Cys207 are disulfide-bonded. A helical transmembrane segment spans residues 133–153 (MSLFLQINMYSSVFFLTWMSF). Topologically, residues 154 to 175 (DRYLALAKAMRCGLFRTKHHAR) are cytoplasmic. A helical membrane pass occupies residues 176 to 194 (LSCGLIWMASVSATLVPFT). Over 195–220 (AVHLRHTEEACFCFADVREVQWLEVT) the chain is Extracellular. Residues 221-236 (LGFIVPFAIIGLCYSL) traverse the membrane as a helical segment. The Cytoplasmic portion of the chain corresponds to 237–259 (IVRALIRAHRHRGLRPRRQKALR). A helical transmembrane segment spans residues 260 to 280 (MIFAVVLVFFICWLPENVFIS). Over 281-306 (VHLLQWAQPGDTPCKQSFRHAYPLTG) the chain is Extracellular. The helical transmembrane segment at 307–327 (HIVNLAAFSNSCLSPLIYSFL) threads the bilayer. Residues 328-375 (GETFRDKLRLYVAQKTSLPALNRFCHATLKAVIPDSTEQSDVKFSSAV) are Cytoplasmic-facing.

It belongs to the G-protein coupled receptor 1 family. As to quaternary structure, homodimer. Heterodimer; heterodimerizes with other G-protein-coupled receptor (GPCRs) like CRHR1, HTR1A and PAQR8. Interacts with RAMP3; the interaction confers proper subcellular localization and function in cardioprotection. Interacts with KRT7 and KRT8. Interacts with EGFR; the interaction increases after agonist-induced stimulation in cancer-associated fibroblasts (CAF). Interacts with EGFR and ESR1. Interacts (via C-terminus tail motif) with DLG4 (via N-terminus tandem pair of PDZ domains); the interaction is direct and induces the increase of GPER1 protein levels residing at the plasma membrane surface in a estradiol-independent manner. Ubiquitinated; ubiquitination occurs at the plasma membrane and leads to proteasome-mediated degradation. In terms of processing, glycosylated. In terms of tissue distribution, expressed in the brain. Expressed in neurons of the hippocampus, hypothalamic paraventricular nucleus (PVN), supraoptic nucleus (SON) and the median eminence. Expressed in magnocellular neurosecretory cells (MNCs) which secrete oxytocin but not in MNCs which secrete vasopressin. Expressed in glial cells. Expressed in the nucleus ambiguous. Expressed in epithelial cells, in pachytene spermatocytes (PS) (at protein level). Expressed strongly in vascular endothelial cells and poorly in vascular smooth muscle cells (VSMC). Expressed in the brain, lung, pituitary gland, adrenal medulla, renal pelvis and ovary. Expressed in CA1 hippocampus. Expressed weakly in heart, skeletal muscle and kidney.

Its subcellular location is the nucleus. It is found in the cytoplasm. It localises to the perinuclear region. The protein localises to the cytoskeleton. The protein resides in the cytoplasmic vesicle membrane. Its subcellular location is the cell membrane. It is found in the basolateral cell membrane. It localises to the endoplasmic reticulum membrane. The protein localises to the early endosome. The protein resides in the recycling endosome. Its subcellular location is the golgi apparatus. It is found in the trans-Golgi network. It localises to the golgi apparatus membrane. The protein localises to the cell projection. The protein resides in the dendrite. Its subcellular location is the dendritic spine membrane. It is found in the axon. It localises to the postsynaptic density. The protein localises to the mitochondrion membrane. Its function is as follows. G-protein coupled estrogen receptor that binds to 17-beta-estradiol (E2) with high affinity, leading to rapid and transient activation of numerous intracellular signaling pathways. Stimulates cAMP production, calcium mobilization and tyrosine kinase Src inducing the release of heparin-bound epidermal growth factor (HB-EGF) and subsequent transactivation of the epidermal growth factor receptor (EGFR), activating downstream signaling pathways such as PI3K/Akt and ERK/MAPK. Mediates pleiotropic functions among others in the cardiovascular, endocrine, reproductive, immune and central nervous systems. Has a role in cardioprotection by reducing cardiac hypertrophy and perivascular fibrosis in a RAMP3-dependent manner. Regulates arterial blood pressure by stimulating vasodilation and reducing vascular smooth muscle and microvascular endothelial cell proliferation. Plays a role in blood glucose homeostasis contributing to the insulin secretion response by pancreatic beta cells. Triggers mitochondrial apoptosis during pachytene spermatocyte differentiation. Stimulates uterine epithelial cell proliferation. Enhances uterine contractility in response to oxytocin. Contributes to thymic atrophy by inducing apoptosis. Attenuates TNF-mediated endothelial expression of leukocyte adhesion molecules. Promotes neuritogenesis in developing hippocampal neurons. Plays a role in acute neuroprotection against NMDA-induced excitotoxic neuronal death. Increases firing activity and intracellular calcium oscillations in luteinizing hormone-releasing hormone (LHRH) neurons. Inhibits early osteoblast proliferation at growth plate during skeletal development. Inhibits mature adipocyte differentiation and lipid accumulation. Involved in the recruitment of beta-arrestin 2 ARRB2 at the plasma membrane in epithelial cells. Also functions as a receptor for aldosterone mediating rapid regulation of vascular contractibility through the PI3K/ERK signaling pathway. Involved in cancer progression regulation. Stimulates cancer-associated fibroblast (CAF) proliferation by a rapid genomic response through the EGFR/ERK transduction pathway. Associated with EGFR, may act as a transcription factor activating growth regulatory genes (c-fos, cyclin D1). Promotes integrin alpha-5/beta-1 and fibronectin (FN) matrix assembly in breast cancer cells. This is G-protein coupled estrogen receptor 1 (Gper1) from Rattus norvegicus (Rat).